A 312-amino-acid chain; its full sequence is Ribosomal RNA small subunit methyltransferase H (312 aa).

Residues 33 to 35 (GGY), aspartate 51, phenylalanine 78, aspartate 97, and glutamine 104 each bind S-adenosyl-L-methionine.

This sequence belongs to the methyltransferase superfamily. RsmH family.

The protein localises to the cytoplasm. The catalysed reaction is cytidine(1402) in 16S rRNA + S-adenosyl-L-methionine = N(4)-methylcytidine(1402) in 16S rRNA + S-adenosyl-L-homocysteine + H(+). Specifically methylates the N4 position of cytidine in position 1402 (C1402) of 16S rRNA. The protein is Ribosomal RNA small subunit methyltransferase H of Orientia tsutsugamushi (strain Ikeda) (Rickettsia tsutsugamushi).